Consider the following 91-residue polypeptide: Putative regulatory protein Moth_0891 (91 aa).

This sequence belongs to the RemA family.

In Moorella thermoacetica (strain ATCC 39073 / JCM 9320), this protein is Putative regulatory protein Moth_0891.